Here is a 547-residue protein sequence, read N- to C-terminus: MSAASSAIPKRSDPRLLDQKKSAKSTLPKNTPENGVSTVKNLQHVPCKFFRNGTCTAGENCPFSHSLETERPICKYFLKGNCKFGPKCALSHALPGNTNLPNGTSTNTMASMAANGGASSVASKQMGANQISPSLSSKTMKNPADKANNTTATDVRGNTATSPYFPFSRSPGRHSGNSTINGMMTTPNFLSSGVNSRSVDEFNNSSSGFPSSLNGIPIASPPLATSPTSFSLASSASSTNLGGSKGLLFQQMTSENNRDYFSRRPTLLNTYGNRCSSTDTLSSLSRLTSQDPLKASLPLQSPPLAPKTGVSLSRPRLTLDQSLGNLSLGSGINQRRQVPRSNSYAGAFPSVVSASLPTKVDLNHQMDVSDEEQRFLSTPLGSFDESILGSSPINRLSSSFKQYTSSLKSPGLSTRTSSTMNSLNSSRFGAYFSKSRYVEGSGSMSTTPLATSVNNSYKLPSGFSVREEAVFSSPTTEGSRPVSLARLKSEPIFRSDTASPETIAGLGDTKNDPVVSTNNSVSRITVANSSPPWNSTVEEETPFQMDD.

The disordered stretch occupies residues methionine 1–serine 37. Residues lysine 10 to lysine 21 show a composition bias toward basic and acidic residues. The span at lysine 24–serine 37 shows a compositional bias: polar residues. C3H1-type zinc fingers lie at residues asparagine 41 to leucine 67 and glutamate 68 to proline 95. Residues serine 132–glycine 176 form a disordered region. Residues alanine 147–serine 162 show a composition bias toward polar residues. A Phosphoserine modification is found at serine 343. Tyrosine 344 is modified (phosphotyrosine). Residues serine 353, serine 355, serine 483, serine 489, serine 495, and serine 499 each carry the phosphoserine modification. The residue at position 502 (threonine 502) is a Phosphothreonine. Positions valine 526–threonine 536 are enriched in polar residues. The disordered stretch occupies residues valine 526–aspartate 547. Residues valine 537–aspartate 547 show a composition bias toward acidic residues.

This is an uncharacterized protein from Schizosaccharomyces pombe (strain 972 / ATCC 24843) (Fission yeast).